The primary structure comprises 231 residues: uncharacterized protein (231 aa).

An SWIM-type zinc finger spans residues 43 to 76 (YKVKVDLDNNYFGLCTCQYKYNCKHAYALIEAYE).

This is an uncharacterized protein from Methanocaldococcus jannaschii (strain ATCC 43067 / DSM 2661 / JAL-1 / JCM 10045 / NBRC 100440) (Methanococcus jannaschii).